The primary structure comprises 396 residues: NADH-quinone oxidoreductase subunit D (396 aa).

Belongs to the complex I 49 kDa subunit family. NDH-1 is composed of 14 different subunits. Subunits NuoB, C, D, E, F, and G constitute the peripheral sector of the complex.

It is found in the cell inner membrane. The enzyme catalyses a quinone + NADH + 5 H(+)(in) = a quinol + NAD(+) + 4 H(+)(out). Functionally, NDH-1 shuttles electrons from NADH, via FMN and iron-sulfur (Fe-S) centers, to quinones in the respiratory chain. The immediate electron acceptor for the enzyme in this species is believed to be ubiquinone. Couples the redox reaction to proton translocation (for every two electrons transferred, four hydrogen ions are translocated across the cytoplasmic membrane), and thus conserves the redox energy in a proton gradient. The protein is NADH-quinone oxidoreductase subunit D of Methylobacterium radiotolerans (strain ATCC 27329 / DSM 1819 / JCM 2831 / NBRC 15690 / NCIMB 10815 / 0-1).